The primary structure comprises 291 residues: Phosphatidylcholine-sterol acyltransferase (291 aa).

Residue Asn-28 is glycosylated (N-linked (GlcNAc...) asparagine). The active-site Nucleophile is the Ser-125. Asn-179 carries an N-linked (GlcNAc...) asparagine glycan. A disulfide bridge links Cys-220 with Cys-263. Asp-252 acts as the Charge relay system in catalysis. Asn-280 carries an N-linked (GlcNAc...) asparagine glycan.

The protein belongs to the AB hydrolase superfamily. Lipase family.

The protein resides in the secreted. The catalysed reaction is a sterol + a 1,2-diacyl-sn-glycero-3-phosphocholine = a sterol ester + a 1-acyl-sn-glycero-3-phosphocholine. Its activity is regulated as follows. APOA1 is the most potent activator in plasma. Also activated by APOE, APOC1 and APOA4. Functionally, central enzyme in the extracellular metabolism of plasma lipoproteins. Synthesized mainly in the liver and secreted into plasma where it converts cholesterol and phosphatidylcholines (lecithins) to cholesteryl esters and lysophosphatidylcholines on the surface of high and low density lipoproteins (HDLs and LDLs). The cholesterol ester is then transported back to the liver. Has a preference for plasma 16:0-18:2 or 18:O-18:2 phosphatidylcholines. Also produced in the brain by primary astrocytes, and esterifies free cholesterol on nascent APOE-containing lipoproteins secreted from glia and influences cerebral spinal fluid (CSF) APOE- and APOA1 levels. Together with APOE and the cholesterol transporter ABCA1, plays a key role in the maturation of glial-derived, nascent lipoproteins. Required for remodeling high-density lipoprotein particles into their spherical forms. The sequence is that of Phosphatidylcholine-sterol acyltransferase (LCAT) from Myodes glareolus (Bank vole).